The sequence spans 255 residues: 3-deoxy-manno-octulosonate cytidylyltransferase (255 aa).

It belongs to the KdsB family.

The protein resides in the cytoplasm. The enzyme catalyses 3-deoxy-alpha-D-manno-oct-2-ulosonate + CTP = CMP-3-deoxy-beta-D-manno-octulosonate + diphosphate. Its pathway is nucleotide-sugar biosynthesis; CMP-3-deoxy-D-manno-octulosonate biosynthesis; CMP-3-deoxy-D-manno-octulosonate from 3-deoxy-D-manno-octulosonate and CTP: step 1/1. It participates in bacterial outer membrane biogenesis; lipopolysaccharide biosynthesis. Functionally, activates KDO (a required 8-carbon sugar) for incorporation into bacterial lipopolysaccharide in Gram-negative bacteria. This Xanthobacter autotrophicus (strain ATCC BAA-1158 / Py2) protein is 3-deoxy-manno-octulosonate cytidylyltransferase.